Consider the following 94-residue polypeptide: Phosphoribosyl-ATP pyrophosphatase (94 aa).

This sequence belongs to the PRA-PH family.

Its subcellular location is the cytoplasm. It carries out the reaction 1-(5-phospho-beta-D-ribosyl)-ATP + H2O = 1-(5-phospho-beta-D-ribosyl)-5'-AMP + diphosphate + H(+). It functions in the pathway amino-acid biosynthesis; L-histidine biosynthesis; L-histidine from 5-phospho-alpha-D-ribose 1-diphosphate: step 2/9. This Pyrobaculum islandicum (strain DSM 4184 / JCM 9189 / GEO3) protein is Phosphoribosyl-ATP pyrophosphatase.